We begin with the raw amino-acid sequence, 239 residues long: MLTRKQQELLLFIHERMKESGVPPSFDEMKDALDLASKSGIHRLITALEERGFIRRLPNRARALEVIKLPEAMTSSIPPRRTGFSPSVIEGSRGKLQAVPSAPAKQVEEVRNSSSIPVMGRIAAGVPISAIQNNTHDISVPMEMLGSGEHYALEVKGDSMIEAGILDGDTVIIRNATTANPGDIVVALVDDEEATLKRFRRRGASIALEAANPAYETRIFGPDRVKIQGKLVGLIRRYH.

Residues 26–46 (FDEMKDALDLASKSGIHRLIT) constitute a DNA-binding region (H-T-H motif). Residues Ser-159 and Lys-197 each act as for autocatalytic cleavage activity in the active site.

The protein belongs to the peptidase S24 family. Homodimer.

The enzyme catalyses Hydrolysis of Ala-|-Gly bond in repressor LexA.. Represses a number of genes involved in the response to DNA damage (SOS response), including recA and lexA. In the presence of single-stranded DNA, RecA interacts with LexA causing an autocatalytic cleavage which disrupts the DNA-binding part of LexA, leading to derepression of the SOS regulon and eventually DNA repair. The chain is LexA repressor from Allorhizobium ampelinum (strain ATCC BAA-846 / DSM 112012 / S4) (Agrobacterium vitis (strain S4)).